The primary structure comprises 433 residues: Elongation factor 1-alpha (433 aa).

Residues 5-220 form the tr-type G domain; sequence KPHINVVFIG…ALDMLKPPQL (216 aa). Residues 14–21 are G1; that stretch reads GHVDHGKS. Residue 14-21 participates in GTP binding; it reads GHVDHGKS. Ser-21 serves as a coordination point for Mg(2+). Positions 70-74 are G2; sequence GVTID. A G3 region spans residues 91–94; it reads DAPG. GTP contacts are provided by residues 91–95 and 146–149; these read DAPGH and NKMD. The segment at 146 to 149 is G4; that stretch reads NKMD. Residues 186–188 form a G5 region; it reads ASF.

Belongs to the TRAFAC class translation factor GTPase superfamily. Classic translation factor GTPase family. EF-Tu/EF-1A subfamily.

It is found in the cytoplasm. The enzyme catalyses GTP + H2O = GDP + phosphate + H(+). Functionally, GTP hydrolase that promotes the GTP-dependent binding of aminoacyl-tRNA to the A-site of ribosomes during protein biosynthesis. The protein is Elongation factor 1-alpha of Nanoarchaeum equitans (strain Kin4-M).